The primary structure comprises 310 residues: Probable plastid-lipid-associated protein 2, chloroplastic (310 aa).

Residues 1 to 59 (MATVQLSTQFSCQTRVSISPNSKSISKPPFLVPVTSIIHRPMISTGGIAVSPRRVFKVR) constitute a chloroplast transit peptide. A Phosphothreonine modification is found at threonine 61. Positions 65–94 (EIGSALLAAEEAIEDVEETERLKRSLVDSL) form a coiled coil.

It belongs to the PAP/fibrillin family.

It is found in the plastid. Its subcellular location is the chloroplast. The protein resides in the plastoglobule. Probably involved in light/cold stress-related jasmonate (JA) biosynthesis. In Arabidopsis thaliana (Mouse-ear cress), this protein is Probable plastid-lipid-associated protein 2, chloroplastic (PAP2).